A 668-amino-acid chain; its full sequence is DNA ligase (668 aa).

Residues 31–35 (DAEYD), 80–81 (SL), and E112 each bind NAD(+). K114 acts as the N6-AMP-lysine intermediate in catalysis. NAD(+) contacts are provided by R135, E172, K289, and K313. C407, C410, C425, and C431 together coordinate Zn(2+). Residues 591 to 668 (SVPQPLAGKV…NEEQLIELLN (78 aa)) form the BRCT domain.

Belongs to the NAD-dependent DNA ligase family. LigA subfamily. The cofactor is Mg(2+). Mn(2+) serves as cofactor.

The catalysed reaction is NAD(+) + (deoxyribonucleotide)n-3'-hydroxyl + 5'-phospho-(deoxyribonucleotide)m = (deoxyribonucleotide)n+m + AMP + beta-nicotinamide D-nucleotide.. In terms of biological role, DNA ligase that catalyzes the formation of phosphodiester linkages between 5'-phosphoryl and 3'-hydroxyl groups in double-stranded DNA using NAD as a coenzyme and as the energy source for the reaction. It is essential for DNA replication and repair of damaged DNA. This Aliivibrio fischeri (strain MJ11) (Vibrio fischeri) protein is DNA ligase.